A 208-amino-acid polypeptide reads, in one-letter code: Hypoxanthine-guanine phosphoribosyltransferase (208 aa).

GMP is bound by residues Lys-63, 122-130 (EDIVDSAIT), Lys-154, and Asp-182. Residue Asp-126 is the Proton acceptor of the active site. Asp-182 is a binding site for Mg(2+).

It belongs to the purine/pyrimidine phosphoribosyltransferase family. Mg(2+) serves as cofactor.

It is found in the cytoplasm. The enzyme catalyses IMP + diphosphate = hypoxanthine + 5-phospho-alpha-D-ribose 1-diphosphate. It catalyses the reaction GMP + diphosphate = guanine + 5-phospho-alpha-D-ribose 1-diphosphate. It participates in purine metabolism; IMP biosynthesis via salvage pathway; IMP from hypoxanthine: step 1/1. Functionally, converts guanine to guanosine monophosphate, and hypoxanthine to inosine monophosphate. Transfers the 5-phosphoribosyl group from 5-phosphoribosylpyrophosphate onto the purine. Plays a central role in the generation of purine nucleotides through the purine salvage pathway. The sequence is that of Hypoxanthine-guanine phosphoribosyltransferase (HGPRT) from Crithidia fasciculata.